A 239-amino-acid chain; its full sequence is Pyridoxine 5'-phosphate synthase (239 aa).

Asn-7 contacts 3-amino-2-oxopropyl phosphate. Residue 9–10 (DH) participates in 1-deoxy-D-xylulose 5-phosphate binding. 3-amino-2-oxopropyl phosphate is bound at residue Arg-18. Residue His-43 is the Proton acceptor of the active site. 1-deoxy-D-xylulose 5-phosphate contacts are provided by Arg-45 and His-50. Residue Glu-70 is the Proton acceptor of the active site. Thr-100 contacts 1-deoxy-D-xylulose 5-phosphate. His-191 functions as the Proton donor in the catalytic mechanism. 3-amino-2-oxopropyl phosphate-binding positions include Gly-192 and 213–214 (GH).

Belongs to the PNP synthase family. Homooctamer; tetramer of dimers.

The protein localises to the cytoplasm. It catalyses the reaction 3-amino-2-oxopropyl phosphate + 1-deoxy-D-xylulose 5-phosphate = pyridoxine 5'-phosphate + phosphate + 2 H2O + H(+). It functions in the pathway cofactor biosynthesis; pyridoxine 5'-phosphate biosynthesis; pyridoxine 5'-phosphate from D-erythrose 4-phosphate: step 5/5. Catalyzes the complicated ring closure reaction between the two acyclic compounds 1-deoxy-D-xylulose-5-phosphate (DXP) and 3-amino-2-oxopropyl phosphate (1-amino-acetone-3-phosphate or AAP) to form pyridoxine 5'-phosphate (PNP) and inorganic phosphate. The polypeptide is Pyridoxine 5'-phosphate synthase (Geotalea uraniireducens (strain Rf4) (Geobacter uraniireducens)).